Reading from the N-terminus, the 259-residue chain is Glycerol-3-phosphate acyltransferase (259 aa).

The next 7 membrane-spanning stretches (helical) occupy residues 11–31 (IILA…IIIV), 62–82 (LVVA…AILL), 93–112 (TSYF…PIYY), 124–144 (LGLL…VWFI), 152–172 (VSVA…IPYL), 188–208 (FSVA…HYWF), and 211–231 (IWAS…LILG).

It belongs to the PlsY family. Probably interacts with PlsX.

The protein resides in the cell membrane. The enzyme catalyses an acyl phosphate + sn-glycerol 3-phosphate = a 1-acyl-sn-glycero-3-phosphate + phosphate. It participates in lipid metabolism; phospholipid metabolism. In terms of biological role, catalyzes the transfer of an acyl group from acyl-phosphate (acyl-PO(4)) to glycerol-3-phosphate (G3P) to form lysophosphatidic acid (LPA). This enzyme utilizes acyl-phosphate as fatty acyl donor, but not acyl-CoA or acyl-ACP. This Mycoplasma capricolum subsp. capricolum (strain California kid / ATCC 27343 / NCTC 10154) protein is Glycerol-3-phosphate acyltransferase.